A 263-amino-acid chain; its full sequence is MNKQAATEKLVAVDIGNTSVNIGIFEGEQLLANWHLGSVAQRMADEYASLLLGLLQHAGIQAGELNRVIMCSVVPPLTTTFEEVFKTYFKATPLVVGAGIKSGVKIRMDNPREVGADRIVNAAAARVLYPGACIIVDMGTATTFDTLSESGEYIGGAIAPGIATSAQAIVEKTSKLPKIEIIHPAKAIGSNTVSAMQSGVYFGYIGLVEELVRRIQAELGQKARVVATGGYASLIAEGSRIFDIVRSDLTLQGLRFIYQMNKV.

Residue 14–21 (DIGNTSVN) participates in ATP binding. 115–118 (GADR) lines the substrate pocket. The active-site Proton acceptor is D117. K(+) is bound at residue D137. Position 140 (T140) interacts with ATP. T192 contributes to the substrate binding site.

The protein belongs to the type III pantothenate kinase family. As to quaternary structure, homodimer. The cofactor is NH4(+). K(+) is required as a cofactor.

The protein resides in the cytoplasm. The catalysed reaction is (R)-pantothenate + ATP = (R)-4'-phosphopantothenate + ADP + H(+). Its pathway is cofactor biosynthesis; coenzyme A biosynthesis; CoA from (R)-pantothenate: step 1/5. Its function is as follows. Catalyzes the phosphorylation of pantothenate (Pan), the first step in CoA biosynthesis. The protein is Type III pantothenate kinase of Dehalococcoides mccartyi (strain ATCC BAA-2100 / JCM 16839 / KCTC 5957 / BAV1).